A 756-amino-acid polypeptide reads, in one-letter code: MNIEELPLPSLLRDFLISKRGIRTLYPPQEEAIRAGLLNGENILMVSATASGKTLLAEVAAVNNVLVNDKKSLVAVPLKALAFEKLNDFNTYSELGIRVAASTGDYNSEDKWLGSYDVIITTYEKLDSLLRLKPSWIWNVGQLIIDEIHFINDDERGPIIESIVAKLRMLNLNPQIIGLSATIGNPEELANWLNAKLVKSDWRPVSLREGVYHKGVVTYVNDGEKRISGQGDSLINLTVDTLNDGGQVLVFSSSRQGAVRIARKLAEYICSSPVRYIDPGEAGKLAEEVRETSSSRILAEELTGLIKCGVSFHHAGLELEVRRVIEEGFRRGVLRVLASTTTLAAGVNLPARRVIVNEYRRYEPGYGFIEIPVMEYKQMAGRAGRPGLDPYGEAIIIVSSKDEVDYVIDKYIKSPPEYVKSNFMNPTSLKFHTLSAVASQYAETIDELVKFTSNTFAGFQGKLSAMIQANSVRRMISRIIDELVDYGFIIRNGDKLEATEVGAVVNRMYLDPDTAHVFIMGLRNLNSDADLNAYSLMLVVKSPKIPKVKVRRNELDELAQQAASMWSSIPLKPSDVDELVNYPEDYEDFLSEFKTAMALLEWINESNEDQIMKTYDVQPGDLRVLSDQAEWLIGALQELARTLGLSGNVVNGLRALRYRVKYGVNDELLELVVNLEGVGRVRARALYAAGYRSIEDLAKANVSDLTRIRGIGDKIAGSIIEQAHQLVKDGRVIKFNESTVKGKTRRGGGGLLDHMY.

Residues Gln-29 and 47–54 (SATASGKT) contribute to the ATP site. The 168-residue stretch at 34-201 (RAGLLNGENI…WLNAKLVKSD (168 aa)) folds into the Helicase ATP-binding domain. Residues 146-149 (DEIH) carry the DEAH box motif. In terms of domain architecture, Helicase C-terminal spans 233–435 (SLINLTVDTL…PTSLKFHTLS (203 aa)).

It belongs to the helicase family. Hel308 subfamily. In terms of assembly, monomer.

It carries out the reaction Couples ATP hydrolysis with the unwinding of duplex DNA by translocating in the 3'-5' direction.. It catalyses the reaction ATP + H2O = ADP + phosphate + H(+). Its function is as follows. DNA-dependent ATPase and 3'-5' DNA helicase that may be involved in repair of stalled replication forks. This is ATP-dependent DNA helicase Hel308 from Caldivirga maquilingensis (strain ATCC 700844 / DSM 13496 / JCM 10307 / IC-167).